The primary structure comprises 621 residues: ATP-dependent lipid A-core flippase (621 aa).

A run of 5 helical transmembrane segments spans residues 32–52, 91–111, 192–212, 286–306, and 312–332; these read IVAALIAIFGVAATESYLAAF, VWGTENKIWTVPLFLIILVVI, IVLLYLNWQLSLIVVLMFPLL, SPFSELIASIALAVVIFIALW, and YTTIGEFMAFIVAMLQMYAPI. The ABC transmembrane type-1 domain maps to 33–344; sequence VAALIAIFGV…LANISIPMQT (312 aa). Residues 378–611 form the ABC transporter domain; sequence FRNVDVEYRS…NGYYTMLRNI (234 aa). 410-417 provides a ligand contact to ATP; the sequence is GRSGSGKS.

This sequence belongs to the ABC transporter superfamily. Lipid exporter (TC 3.A.1.106) family. Homodimer.

The protein resides in the cell inner membrane. The enzyme catalyses ATP + H2O + lipid A-core oligosaccharideSide 1 = ADP + phosphate + lipid A-core oligosaccharideSide 2.. In terms of biological role, involved in lipopolysaccharide (LPS) biosynthesis. Translocates lipid A-core from the inner to the outer leaflet of the inner membrane. Transmembrane domains (TMD) form a pore in the inner membrane and the ATP-binding domain (NBD) is responsible for energy generation. The sequence is that of ATP-dependent lipid A-core flippase from Neisseria meningitidis serogroup A / serotype 4A (strain DSM 15465 / Z2491).